We begin with the raw amino-acid sequence, 552 residues long: Urocanate hydratase (552 aa).

Residues 49-50, Q127, 173-175, D193, 239-240, 260-264, 270-271, and Y319 contribute to the NAD(+) site; these read GG, GMG, NA, QTSAH, and YI. The active site involves C407. G489 is a binding site for NAD(+).

This sequence belongs to the urocanase family. It depends on NAD(+) as a cofactor.

It is found in the cytoplasm. It carries out the reaction 4-imidazolone-5-propanoate = trans-urocanate + H2O. Its pathway is amino-acid degradation; L-histidine degradation into L-glutamate; N-formimidoyl-L-glutamate from L-histidine: step 2/3. In terms of biological role, catalyzes the conversion of urocanate to 4-imidazolone-5-propionate. In Bacillus thuringiensis (strain Al Hakam), this protein is Urocanate hydratase.